A 488-amino-acid chain; its full sequence is R3H and coiled-coil domain-containing protein 1 (488 aa).

Positions 16 to 81 constitute an R3H domain; the sequence is NDFVHRVQEE…KRRTVICHLD (66 aa). Disordered regions lie at residues 87–180 and 195–322; these read SDGP…GDAE and KSPD…DADH. Residues 114-125 show a composition bias toward low complexity; the sequence is GAAAGPRGAPAG. Serine 232 is subject to Phosphoserine. Residues 244 to 321 are a coiled coil; that stretch reads SHGMRSLVDQ…EEDEDEADAD (78 aa). The segment covering 252–265 has biased composition (acidic residues); it reads DQEEEEIEGEEEEK. Basic and acidic residues-rich tracts occupy residues 266-280 and 287-301; these read VDEK…KERV and TDAQ…GERM. Over residues 302–319 the composition is skewed to acidic residues; that stretch reads DEGEDKVDAEEEDEDEAD.

This chain is R3H and coiled-coil domain-containing protein 1, found in Mus musculus (Mouse).